The chain runs to 310 residues: Glutaminase (310 aa).

Substrate contacts are provided by Ser-66, Asn-117, Glu-161, Asn-168, Tyr-192, Tyr-244, and Val-262.

Belongs to the glutaminase family. In terms of assembly, homotetramer.

It carries out the reaction L-glutamine + H2O = L-glutamate + NH4(+). The polypeptide is Glutaminase (Desulfovibrio desulfuricans (strain ATCC 27774 / DSM 6949 / MB)).